Reading from the N-terminus, the 953-residue chain is Zinc finger protein 618 (953 aa).

The residue at position 1 (Met-1) is an N-acetylmethionine. A disordered region spans residues 1–56 (MSQPDGAAAPQVDGASAPGRKSAVNRERLKRSQKSSKVEGPEPVPAEASLSAEQGT). Glycyl lysine isopeptide (Lys-Gly) (interchain with G-Cter in SUMO2) cross-links involve residues Lys-63 and Lys-81. 2 consecutive C2H2-type zinc fingers follow at residues 146–168 (YECG…VRAH) and 187–209 (YTCD…RDLH). Lys-238 is covalently cross-linked (Glycyl lysine isopeptide (Lys-Gly) (interchain with G-Cter in SUMO2)). The segment at 255–277 (YTCEFCGKQYKYYTPYQEHVALH) adopts a C2H2-type 3 zinc-finger fold. Disordered stretches follow at residues 283–305 (APGW…EVTP) and 337–390 (TPPA…SSEP). The span at 339 to 354 (PATQTQTFRAPNSGSP) shows a compositional bias: polar residues. The segment covering 365 to 379 (FSRRVESKAQNHFEE) has biased composition (basic and acidic residues). The C2H2-type 4 zinc finger occupies 391 to 413 (YTCGACGIQFQFYSNLLEHMQSH). Positions 419-428 (NNITSNQSRS) are enriched in polar residues. The interval 419–461 (NNITSNQSRSPPAAVEEKWKPQAQRNSANNTTTSGLTPNSVIP) is disordered. A Glycyl lysine isopeptide (Lys-Gly) (interchain with G-Cter in SUMO2) cross-link involves residue Lys-436. Over residues 441-458 (AQRNSANNTTTSGLTPNS) the composition is skewed to polar residues.

This sequence belongs to the krueppel C2H2-type zinc-finger protein family. As to quaternary structure, interacts with UHRF2.

The protein localises to the nucleus. It is found in the chromosome. Regulates UHRF2 function as a specific 5-hydroxymethylcytosine (5hmC) reader by regulating its chromatin localization. The chain is Zinc finger protein 618 (Znf618) from Mus musculus (Mouse).